The following is a 1705-amino-acid chain: Alpha-protein kinase 3 (1705 aa).

Residues M1–G10 show a composition bias toward low complexity. Residues M1–S33 are disordered. Residues W11–G21 are compositionally biased toward gly residues. The Ig-like 1 domain occupies P77 to E168. The span at D211–F221 shows a compositional bias: basic and acidic residues. Disordered stretches follow at residues D211–G244, L308–A749, G792–G845, G1082–G1145, and R1173–V1226. The residue at position 228 (S228) is a Phosphoserine. The segment covering L308–S342 has biased composition (basic and acidic residues). The span at P370–G382 shows a compositional bias: low complexity. Positions D495–Q504 are enriched in polar residues. Residues T557–S579 are compositionally biased toward low complexity. Positions T598–N609 are enriched in polar residues. The span at E647–A657 shows a compositional bias: basic and acidic residues. Over residues R666 to A676 the composition is skewed to polar residues. Basic and acidic residues predominate over residues K679–G700. Residues K708–A729 are compositionally biased toward polar residues. Residues S736 to A745 show a composition bias toward pro residues. A compositionally biased stretch (basic and acidic residues) spans A829–P844. The segment covering G1120–E1131 has biased composition (low complexity). S1222 carries the post-translational modification Phosphoserine. Residues P1274–S1362 form the Ig-like 2 domain. A disulfide bridge links C1296 with C1346. The Alpha-type protein kinase domain occupies K1390–L1625. Residues P1628–R1705 form a disordered region. The span at P1664 to E1696 shows a compositional bias: polar residues.

It belongs to the protein kinase superfamily. Alpha-type protein kinase family. ALPK subfamily.

It localises to the nucleus. It catalyses the reaction L-seryl-[protein] + ATP = O-phospho-L-seryl-[protein] + ADP + H(+). It carries out the reaction L-threonyl-[protein] + ATP = O-phospho-L-threonyl-[protein] + ADP + H(+). Its function is as follows. Involved in cardiomyocyte differentiation. This Homo sapiens (Human) protein is Alpha-protein kinase 3.